We begin with the raw amino-acid sequence, 387 residues long: Gibberellic acid methyltransferase 2 (387 aa).

Tyrosine 33 provides a ligand contact to S-adenosyl-L-homocysteine. Glutamine 40 provides a ligand contact to gibberellin A4. The S-adenosyl-L-homocysteine site is built by cysteine 74, asparagine 79, aspartate 113, leucine 114, serine 146, and phenylalanine 147. Residues histidine 167 and tryptophan 168 each coordinate gibberellin A4. Residues asparagine 185, arginine 275, aspartate 276, phenylalanine 278, and asparagine 279 each contribute to the Mg(2+) site.

The protein belongs to the methyltransferase superfamily. Type-7 methyltransferase family. SABATH subfamily. Mg(2+) serves as cofactor. In terms of tissue distribution, expressed in siliques and germinating seeds. Not detected in leaves, stems, flowers and roots.

The enzyme catalyses gibberellin A4 + S-adenosyl-L-methionine = O-methyl gibberellin A4 + S-adenosyl-L-homocysteine. With respect to regulation, down-regulated by Zn(2+), Cu(2+) and Fe(3+). No effect of K(+), NH(4+), Na(+), Ca(2+), Mg(2+), Mn(2+) and Fe(2+). Methylates the carboxyl group of several gibberellins (GAs). Substrate preference is GA4 &gt; GA34 &gt; GA9 &gt; GA3 &gt; GA1 &gt; GA51 &gt; GA20. No activity with diterpenes abietic acid and ent-kaurenoic acid. The polypeptide is Gibberellic acid methyltransferase 2 (GAMT2) (Arabidopsis thaliana (Mouse-ear cress)).